Here is a 318-residue protein sequence, read N- to C-terminus: Methionyl-tRNA formyltransferase (318 aa).

112–115 (SILP) is a binding site for (6S)-5,6,7,8-tetrahydrofolate.

This sequence belongs to the Fmt family.

The catalysed reaction is L-methionyl-tRNA(fMet) + (6R)-10-formyltetrahydrofolate = N-formyl-L-methionyl-tRNA(fMet) + (6S)-5,6,7,8-tetrahydrofolate + H(+). In terms of biological role, attaches a formyl group to the free amino group of methionyl-tRNA(fMet). The formyl group appears to play a dual role in the initiator identity of N-formylmethionyl-tRNA by promoting its recognition by IF2 and preventing the misappropriation of this tRNA by the elongation apparatus. The sequence is that of Methionyl-tRNA formyltransferase from Shewanella frigidimarina (strain NCIMB 400).